The sequence spans 51 residues: Small ribosomal subunit protein eS31 (51 aa).

4 residues coordinate Zn(2+): C21, C24, C39, and C42. Residues 21–42 (CPRCGPGVFLAEHEDRFSCGRC) form a C4-type zinc finger.

This sequence belongs to the eukaryotic ribosomal protein eS31 family. In terms of assembly, part of the 30S ribosomal subunit. The cofactor is Zn(2+).

This Picrophilus torridus (strain ATCC 700027 / DSM 9790 / JCM 10055 / NBRC 100828 / KAW 2/3) protein is Small ribosomal subunit protein eS31.